A 674-amino-acid polypeptide reads, in one-letter code: MTLVEVKDDKLEIKPVRLRKEKYKTQLKNKIFNEDDLYLFHEGRNYNAYNFMGAHFTSENRKRGVRFTLWAPRAKNIFLVGDFSNWETKEENKLERINETGLWSIFIPRLKEGIKYKYYIEQEDGKAVLKADPYGIYSEVRPNTASILCEKTKIRWSDKKWLNKREETNYFESPINIYELHLGSWKRKDEDEFLSYDELSIILPKYIKEMGYTHVEFMPLNEHPLDASWGYQVTGYYSITSRYGDIKGLKRLINALHKEDIGVILDWVPGHFCKDEQGLYMFDGTPTYEYEEKWKADNKGWGTFNFDLGKPEVKSFLISNAFYFINEFHIDGLRVDAVSNMLYLNYGRNHGEWVPNIYGGNENLEAIQFIKELNEAIKTYSKGVITIAEESTSWPNVTNDTEYGGLGFDFKWNMGWMNDTLEYNELDPIYRKYHHNKLTFPMMYNHSEKFILPISHDEVVHGKKSLIDKMQGDYWNKLANLRAYMAYMYGHPGKKLMFMGCEFGQFIEWREYEELEWKLIDKFDMHRKTHNFFKDLNNFYKNNSELWELDYDQDGFQWIDADNNEQSIYIFIRKSKNIEKYKIFVCNFTPMVYYDFNIGVPEKGVYREIFNTDKEEYGGSGQVIKGNLFSRKGWCHNQQYTLTIKVPPMAVSVFERIIEENKTEEKIVKEDKYI.

Residue D336 is the Nucleophile of the active site. E389 (proton donor) is an active-site residue.

It belongs to the glycosyl hydrolase 13 family. GlgB subfamily. Monomer.

The catalysed reaction is Transfers a segment of a (1-&gt;4)-alpha-D-glucan chain to a primary hydroxy group in a similar glucan chain.. Its pathway is glycan biosynthesis; glycogen biosynthesis. In terms of biological role, catalyzes the formation of the alpha-1,6-glucosidic linkages in glycogen by scission of a 1,4-alpha-linked oligosaccharide from growing alpha-1,4-glucan chains and the subsequent attachment of the oligosaccharide to the alpha-1,6 position. This chain is 1,4-alpha-glucan branching enzyme GlgB 1 (glgB1), found in Clostridium perfringens (strain 13 / Type A).